A 273-amino-acid polypeptide reads, in one-letter code: Large ribosomal subunit protein uL2 (273 aa).

The disordered stretch occupies residues 221-273 (RGTAMNPVDHPHGGGEGRNFGKHPVTPWGIQTKGKKTRSNKRTDKFIVRRRSK).

It belongs to the universal ribosomal protein uL2 family. As to quaternary structure, part of the 50S ribosomal subunit. Forms a bridge to the 30S subunit in the 70S ribosome.

One of the primary rRNA binding proteins. Required for association of the 30S and 50S subunits to form the 70S ribosome, for tRNA binding and peptide bond formation. It has been suggested to have peptidyltransferase activity; this is somewhat controversial. Makes several contacts with the 16S rRNA in the 70S ribosome. In Sodalis glossinidius (strain morsitans), this protein is Large ribosomal subunit protein uL2.